Consider the following 316-residue polypeptide: Aspartate carbamoyltransferase catalytic subunit (316 aa).

Residues Arg-56 and Thr-57 each contribute to the carbamoyl phosphate site. An L-aspartate-binding site is contributed by Lys-84. 3 residues coordinate carbamoyl phosphate: Arg-106, His-139, and Gln-142. L-aspartate-binding residues include Arg-172 and Arg-226. Carbamoyl phosphate-binding residues include Gly-267 and Pro-268.

This sequence belongs to the aspartate/ornithine carbamoyltransferase superfamily. ATCase family. As to quaternary structure, heterododecamer (2C3:3R2) of six catalytic PyrB chains organized as two trimers (C3), and six regulatory PyrI chains organized as three dimers (R2).

The catalysed reaction is carbamoyl phosphate + L-aspartate = N-carbamoyl-L-aspartate + phosphate + H(+). It functions in the pathway pyrimidine metabolism; UMP biosynthesis via de novo pathway; (S)-dihydroorotate from bicarbonate: step 2/3. Its function is as follows. Catalyzes the condensation of carbamoyl phosphate and aspartate to form carbamoyl aspartate and inorganic phosphate, the committed step in the de novo pyrimidine nucleotide biosynthesis pathway. In Mycobacterium sp. (strain MCS), this protein is Aspartate carbamoyltransferase catalytic subunit.